Here is a 511-residue protein sequence, read N- to C-terminus: Glucans biosynthesis protein G (511 aa).

An N-terminal signal peptide occupies residues 1–22 (MMKMRWLSAAVMLTLYTSSSWA).

It belongs to the OpgD/OpgG family.

The protein localises to the periplasm. The protein operates within glycan metabolism; osmoregulated periplasmic glucan (OPG) biosynthesis. Involved in the biosynthesis of osmoregulated periplasmic glucans (OPGs). In Escherichia fergusonii (strain ATCC 35469 / DSM 13698 / CCUG 18766 / IAM 14443 / JCM 21226 / LMG 7866 / NBRC 102419 / NCTC 12128 / CDC 0568-73), this protein is Glucans biosynthesis protein G.